A 296-amino-acid polypeptide reads, in one-letter code: MKASTVIRFPFSVRRSVWLNKYSTFRIGGPANYFKVVHSASEAQQVIQFLHSHNYPFIIVGKGSNCLFDDRGFDGFVLCNGIQGKEFVSETTIKVYSGTSFSFLGKTLSSSGYSGLEFAVGIPGSVGGAVFMNAGIGNQDTAAVIESVEVINSKGEILSYNTEELGFGYRTSRFQHCNEFILSATFRLSRNSSSVKIAKDLLRNRLLSQPYQQPSTGCIFRNPPGNSAGKLIDEAGLKGFSLGGAQISPKHANFIVNTGRATSQEVKQLIQIVQDKLKSQGINLEEEVRIIPYQLP.

In terms of domain architecture, FAD-binding PCMH-type spans 26-191 (RIGGPANYFK…LSATFRLSRN (166 aa)). The active site involves R170. C218 acts as the Proton donor in catalysis. Residue E287 is part of the active site.

This sequence belongs to the MurB family. The cofactor is FAD.

It localises to the cytoplasm. It catalyses the reaction UDP-N-acetyl-alpha-D-muramate + NADP(+) = UDP-N-acetyl-3-O-(1-carboxyvinyl)-alpha-D-glucosamine + NADPH + H(+). It participates in cell wall biogenesis; peptidoglycan biosynthesis. Its function is as follows. Cell wall formation. This is UDP-N-acetylenolpyruvoylglucosamine reductase from Chlamydia abortus (strain DSM 27085 / S26/3) (Chlamydophila abortus).